We begin with the raw amino-acid sequence, 126 residues long: Protein translocase subunit SecE (126 aa).

3 helical membrane-spanning segments follow: residues 20–40 (WLAA…YGEM), 42–62 (VVVR…VAAT), and 97–117 (IVLA…GIMV).

This sequence belongs to the SecE/SEC61-gamma family. As to quaternary structure, component of the Sec protein translocase complex. Heterotrimer consisting of SecY, SecE and SecG subunits. The heterotrimers can form oligomers, although 1 heterotrimer is thought to be able to translocate proteins. Interacts with the ribosome. Interacts with SecDF, and other proteins may be involved. Interacts with SecA.

Its subcellular location is the cell inner membrane. Its function is as follows. Essential subunit of the Sec protein translocation channel SecYEG. Clamps together the 2 halves of SecY. May contact the channel plug during translocation. The polypeptide is Protein translocase subunit SecE (Vibrio alginolyticus).